The primary structure comprises 382 residues: Flap endonuclease 1 (382 aa).

The segment at 1–105 (MGIKGLNAII…HELTKRSSRR (105 aa)) is N-domain. D34 provides a ligand contact to Mg(2+). DNA-binding residues include R47 and R71. Positions 87, 156, 158, 177, and 179 each coordinate Mg(2+). Positions 120 to 251 (EKMKQERRLV…VTALKLIKTH (132 aa)) are I-domain. DNA is bound at residue E156. DNA contacts are provided by G229 and D231. Mg(2+) is bound at residue D231. The interval 339–347 (IQGRLDGFF) is interaction with PCNA. Positions 358 to 382 (AAAAKRAQENKKLNKNKNKVTKGRR) are disordered. The span at 370-382 (LNKNKNKVTKGRR) shows a compositional bias: basic residues.

This sequence belongs to the XPG/RAD2 endonuclease family. FEN1 subfamily. In terms of assembly, interacts with PCNA. Three molecules of RAD27 bind to one PCNA trimer with each molecule binding to one PCNA monomer. PCNA stimulates the nuclease activity without altering cleavage specificity. Mg(2+) is required as a cofactor. In terms of processing, phosphorylated. Phosphorylation upon DNA damage induces relocalization to the nuclear plasma.

It is found in the nucleus. Its subcellular location is the nucleolus. The protein resides in the nucleoplasm. The protein localises to the mitochondrion. Its function is as follows. Structure-specific nuclease with 5'-flap endonuclease and 5'-3' exonuclease activities involved in DNA replication and repair. During DNA replication, cleaves the 5'-overhanging flap structure that is generated by displacement synthesis when DNA polymerase encounters the 5'-end of a downstream Okazaki fragment. It enters the flap from the 5'-end and then tracks to cleave the flap base, leaving a nick for ligation. Also involved in the long patch base excision repair (LP-BER) pathway, by cleaving within the apurinic/apyrimidinic (AP) site-terminated flap. Acts as a genome stabilization factor that prevents flaps from equilibrating into structures that lead to duplications and deletions. Also possesses 5'-3' exonuclease activity on nicked or gapped double-stranded DNA, and exhibits RNase H activity. Also involved in replication and repair of rDNA and in repairing mitochondrial DNA. The chain is Flap endonuclease 1 from Saccharomyces cerevisiae (strain RM11-1a) (Baker's yeast).